Consider the following 303-residue polypeptide: Aspartate carbamoyltransferase catalytic subunit (303 aa).

Residues Arg49 and Thr50 each coordinate carbamoyl phosphate. Lys77 contributes to the L-aspartate binding site. Carbamoyl phosphate-binding residues include Arg99, His126, and Gln129. Positions 159 and 211 each coordinate L-aspartate. Residues Ser252 and Pro253 each coordinate carbamoyl phosphate.

This sequence belongs to the aspartate/ornithine carbamoyltransferase superfamily. ATCase family. Heterododecamer (2C3:3R2) of six catalytic PyrB chains organized as two trimers (C3), and six regulatory PyrI chains organized as three dimers (R2).

The enzyme catalyses carbamoyl phosphate + L-aspartate = N-carbamoyl-L-aspartate + phosphate + H(+). Its pathway is pyrimidine metabolism; UMP biosynthesis via de novo pathway; (S)-dihydroorotate from bicarbonate: step 2/3. Its function is as follows. Catalyzes the condensation of carbamoyl phosphate and aspartate to form carbamoyl aspartate and inorganic phosphate, the committed step in the de novo pyrimidine nucleotide biosynthesis pathway. The polypeptide is Aspartate carbamoyltransferase catalytic subunit (Listeria innocua serovar 6a (strain ATCC BAA-680 / CLIP 11262)).